Consider the following 83-residue polypeptide: Calsensin (83 aa).

EF-hand domains lie at 4 to 39 (KVKA…LDAY) and 46 to 81 (KVKE…LLCQ). 10 residues coordinate Ca(2+): Asp-17, Asn-19, Asp-21, Tyr-23, Glu-28, Asp-59, Asn-61, Asp-63, Lys-65, and Glu-70.

Selectively expressed in a small group of neurons.

It localises to the cytoplasm. In terms of biological role, may function as a trigger protein which interacts with a larger protein. May mediate calcium-dependent signal transduction events in the growth cones and axons of a small group of sensory neurons which fasciculate in a single axon tract. The polypeptide is Calsensin (Haemopis marmorata (Green horse leech)).